The chain runs to 422 residues: MIDNIIDYLYERGSIAQITDRKKLNAVLNSQPITLYCGFDPTADSLHIGHLAPLLCLKRFQKAGHRPLILLGGATGLIGDPSFKDSERKLQSFNTTQKWIKKIKLQIALFIDCNSNNASQAHIIDNYSWFSSMNILTFLRDIGKFFSINKMINKDIIKKRLKNDNYGISYTEFSYNLMQSYDFAHIYKHYDAILQIGGSDQWGNIISGIDLIKRMYKKNAYGLTVPLLTNFNNIKFGKTEKNTIWLDPEKTSPYQFYQYWINIDDKSAYHFLKIFTDISVQDINSFKNRDHSYSQAQYILAENMTQLVHGKRGLNIAQRISQNLFSYNILKLTLNDFHQLIQDGIPNIILETNTSLQEALTKSKLATSRSQARYFIKSNAITINAHKQSKIEYIFQDSDRIYNLYTLLKRGKKNYCLIQWNI.

Y36 is a binding site for L-tyrosine. Residues P41–H50 carry the 'HIGH' region motif. L-tyrosine-binding residues include Y175 and Q179. A 'KMSKS' region motif is present at residues K235–T239. K238 contacts ATP. In terms of domain architecture, S4 RNA-binding spans T354 to G411.

This sequence belongs to the class-I aminoacyl-tRNA synthetase family. TyrS type 1 subfamily. In terms of assembly, homodimer.

It localises to the cytoplasm. The catalysed reaction is tRNA(Tyr) + L-tyrosine + ATP = L-tyrosyl-tRNA(Tyr) + AMP + diphosphate + H(+). Catalyzes the attachment of tyrosine to tRNA(Tyr) in a two-step reaction: tyrosine is first activated by ATP to form Tyr-AMP and then transferred to the acceptor end of tRNA(Tyr). In Blochmanniella floridana, this protein is Tyrosine--tRNA ligase.